Reading from the N-terminus, the 75-residue chain is UPF0352 protein ASA_2693 (75 aa).

This sequence belongs to the UPF0352 family.

The protein is UPF0352 protein ASA_2693 of Aeromonas salmonicida (strain A449).